Reading from the N-terminus, the 175-residue chain is NADH-ubiquinone oxidoreductase chain 6 (175 aa).

Helical transmembrane passes span 1-21, 25-45, 47-67, 87-107, 116-136, and 149-169; these read MMAY…VGFS, SPIY…GIVM, FGGS…MLVV, AAVL…VLYV, VFNF…FGVF, and YGVW…LVIL.

This sequence belongs to the complex I subunit 6 family. Core subunit of respiratory chain NADH dehydrogenase (Complex I) which is composed of 45 different subunits.

It localises to the mitochondrion inner membrane. It carries out the reaction a ubiquinone + NADH + 5 H(+)(in) = a ubiquinol + NAD(+) + 4 H(+)(out). Core subunit of the mitochondrial membrane respiratory chain NADH dehydrogenase (Complex I) which catalyzes electron transfer from NADH through the respiratory chain, using ubiquinone as an electron acceptor. Essential for the catalytic activity and assembly of complex I. The polypeptide is NADH-ubiquinone oxidoreductase chain 6 (MT-ND6) (Ceratotherium simum (White rhinoceros)).